A 1381-amino-acid chain; its full sequence is Major capsid protein (1381 aa).

This sequence belongs to the herpesviridae major capsid protein family. Homomultimer. Makes the hexons and eleven out of twelve pentons. Interacts with triplex proteins 1/TRX1 and 2/TRX2; adjacent capsomers are linked together in groups of three by triplexes, heterotrimeric complexes composed of one molecule of TRX1 and two molecules of TRX2. Interacts with scaffold protein; this interaction allows efficient MCP transport to the host nucleus. Interacts with capsid vertex component 2/CVC2. Interacts with the small capsomere-interacting protein/SCP.

The protein resides in the virion. It is found in the host nucleus. Functionally, self-assembles to form an icosahedral capsid with a T=16 symmetry, about 200 nm in diameter, and consisting of 150 hexons and 12 pentons (total of 162 capsomers). Hexons form the edges and faces of the capsid and are each composed of six MCP molecules. In contrast, one penton is found at each of the 12 vertices. Eleven of the pentons are MCP pentamers, while the last vertex is occupied by the portal complex. The capsid is surrounded by a layer of proteinaceous material designated the tegument which, in turn, is enclosed in an envelope of host cell-derived lipids containing virus-encoded glycoproteins. In Epstein-Barr virus (strain B95-8) (HHV-4), this protein is Major capsid protein.